Reading from the N-terminus, the 425-residue chain is uncharacterized protein (425 aa).

Positions 55 to 181 (RYSHSLGVYE…DLDADRMDYL (127 aa)) constitute an HD domain.

This is an uncharacterized protein from Mycoplasma pneumoniae (strain ATCC 29342 / M129 / Subtype 1) (Mycoplasmoides pneumoniae).